A 1076-amino-acid polypeptide reads, in one-letter code: Vacuolar membrane protease (1076 aa).

Topologically, residues 1–11 (MKCYNPSAFVP) are cytoplasmic. The helical transmembrane segment at 12 to 32 (MAVTLVTVVIYLGVFIPLLII) threads the bilayer. Residues 33-437 (HETVPSAPDD…TVFAVFRLRT (405 aa)) lie on the Vacuolar side of the membrane. 3 N-linked (GlcNAc...) asparagine glycosylation sites follow: Asn-50, Asn-99, and Asn-156. Residues His-220 and Asp-232 each contribute to the Zn(2+) site. Glu-266 (proton acceptor) is an active-site residue. 3 residues coordinate Zn(2+): Glu-267, Glu-292, and His-364. Residues 438-458 (LFAWSLTLLIASPLILFAVSY) traverse the membrane as a helical segment. The Cytoplasmic portion of the chain corresponds to 459–491 (LLNRQEKFYFFAGSIKSKNPEDEPISLGGWRGA). The helical transmembrane segment at 492–512 (FRFPITLFITSAITFACASLI) threads the bilayer. At 513-525 (NKINPMIIYSSPY) the chain is on the vacuolar side. The helical transmembrane segment at 526–546 (AVWSMSATLFFSVFWFIMAGC) threads the bilayer. Over 547 to 556 (NFVRPSALQR) the chain is Cytoplasmic. The chain crosses the membrane as a helical span at residues 557–577 (GYAFMWMFVFGWILLVVATVY). Residues 578–584 (EDRFKIS) are Vacuolar-facing. A helical transmembrane segment spans residues 585 to 605 (GGYLFVFYEAAIFLATLIAIC). Topologically, residues 606–738 (EQFALPRKST…LPIWTWLVQY (133 aa)) are cytoplasmic. Disordered regions lie at residues 619-662 (DSQN…EETV) and 701-720 (SYDG…HPYG). A compositionally biased stretch (basic and acidic residues) spans 621–632 (QNDHSDNQDHHH). Over residues 647 to 660 (PNADDEAAEEDQEE) the composition is skewed to acidic residues. The chain crosses the membrane as a helical span at residues 739–759 (LLVGPFILVILGQVGLFLVAA). The Vacuolar segment spans residues 760 to 771 (LHQTGTDGSPLF). The helical transmembrane segment at 772-792 (LPYLIVAIFSILLLLPVTPFI) threads the bilayer. Residues 793–799 (HRLTHHM) lie on the Cytoplasmic side of the membrane. A helical transmembrane segment spans residues 800–820 (PTFFFLVFIGTLIYNLVAFPF). Over 821–1076 (SPNNRYKAYF…LGLAFLLAYV (256 aa)) the chain is Vacuolar. Asn-912 carries an N-linked (GlcNAc...) asparagine glycan.

This sequence belongs to the peptidase M28 family. The cofactor is Zn(2+).

Its subcellular location is the vacuole membrane. Functionally, may be involved in vacuolar sorting and osmoregulation. The chain is Vacuolar membrane protease from Sclerotinia sclerotiorum (strain ATCC 18683 / 1980 / Ss-1) (White mold).